We begin with the raw amino-acid sequence, 225 residues long: Octanoyltransferase (225 aa).

Positions 43 to 225 (GTAPELVWLL…KTFRDVFGRG (183 aa)) constitute a BPL/LPL catalytic domain. Substrate-binding positions include 82–89 (RGGQYTYH), 157–159 (AIG), and 170–172 (GVS). Catalysis depends on C188, which acts as the Acyl-thioester intermediate.

Belongs to the LipB family.

Its subcellular location is the cytoplasm. It catalyses the reaction octanoyl-[ACP] + L-lysyl-[protein] = N(6)-octanoyl-L-lysyl-[protein] + holo-[ACP] + H(+). It participates in protein modification; protein lipoylation via endogenous pathway; protein N(6)-(lipoyl)lysine from octanoyl-[acyl-carrier-protein]: step 1/2. Its function is as follows. Catalyzes the transfer of endogenously produced octanoic acid from octanoyl-acyl-carrier-protein onto the lipoyl domains of lipoate-dependent enzymes. Lipoyl-ACP can also act as a substrate although octanoyl-ACP is likely to be the physiological substrate. The chain is Octanoyltransferase from Parvibaculum lavamentivorans (strain DS-1 / DSM 13023 / NCIMB 13966).